The primary structure comprises 374 residues: Flagellar P-ring protein 1 (374 aa).

The signal sequence occupies residues 1 to 26 (MVPNLMVIKKHLIGLLLILCPLSLQA).

This sequence belongs to the FlgI family. In terms of assembly, the basal body constitutes a major portion of the flagellar organelle and consists of four rings (L,P,S, and M) mounted on a central rod.

The protein resides in the periplasm. It localises to the bacterial flagellum basal body. Its function is as follows. Assembles around the rod to form the L-ring and probably protects the motor/basal body from shearing forces during rotation. The polypeptide is Flagellar P-ring protein 1 (Photobacterium profundum (strain SS9)).